Here is a 120-residue protein sequence, read N- to C-terminus: uncharacterized protein (120 aa).

A run of 3 helical transmembrane segments spans residues 24 to 44 (ALLG…ALCY), 61 to 81 (IGVV…NLAV), and 86 to 106 (PLGK…GIVV).

This sequence to M.leprae ML1176.

It is found in the cell membrane. This is an uncharacterized protein from Mycobacterium bovis (strain ATCC BAA-935 / AF2122/97).